A 366-amino-acid chain; its full sequence is MTAMMKAAVFVEPGRIELADKPIPDIGPNDALVRITTTTICGTDVHILKGEYPVAKGLTVGHEPVGIIEKLGSAVTGYREGQRVIAGAICPNFNSYAAQDGVASQDGSYLMASGQCGCHGYKATAGWRFGNMIDGTQAEYVLVPDAQANLTPIPDGLTDEQVLMCPDIMSTGFKGAENANIRIGHTVAVFAQGPIGLCATAGARLCGATTIIAIDGNDHRLEIARKMGADVVLNFRNCDVVDEVMKLTGGRGVDASIEALGTQATFEQSLRVLKPGGTLSSLGVYSSDLTIPLSAFAAGLGDHKINTALCPGGKERMRRLINVIESGRVDLGALVTHQYRLDDIVAAYDLFANQRDGVLKIAIKPH.

Positions 41, 62, 63, and 167 each coordinate Zn(2+).

The protein belongs to the zinc-containing alcohol dehydrogenase family. In terms of assembly, homotetramer. Zn(2+) serves as cofactor.

It catalyses the reaction a primary alcohol + NAD(+) = an aldehyde + NADH + H(+). The catalysed reaction is a secondary alcohol + NAD(+) = a ketone + NADH + H(+). It carries out the reaction (R,R)-butane-2,3-diol + NAD(+) = (R)-acetoin + NADH + H(+). The enzyme catalyses an aldehyde + NAD(+) + H2O = a carboxylate + NADH + 2 H(+). Its function is as follows. Multifunctional alcohol dehydrogenase exhibiting NAD(+)-dependent dehydrogenase activities for 2,3-butanediol, ethanol and acetaldehyde, and reductase activities for acetoin (NADH-dependent), and diacetyl and acetaldehyde (independently of whether NADH or NADPH is the reductant). The rate of oxidation of 2,3-butanediol is much higher than for the oxidation of ethanol. Has acetaldehyde dehydrogenase activity leading to acetate formation. May function in the release of excess reducing power in the absence of exogenous hydrogen acceptors such as oxygen. The sequence is that of Alcohol dehydrogenase (adh) from Cupriavidus necator (Alcaligenes eutrophus).